Reading from the N-terminus, the 834-residue chain is Dual specificity calcium/calmodulin-dependent 3',5'-cyclic nucleotide phosphodiesterase 1 (834 aa).

A disordered region spans residues 152–338; it reads HSHGRDDQQQ…DELSEVQPDA (187 aa). The span at 207–222 shows a compositional bias: low complexity; that stretch reads THSGPTGPPSNTSSET. A compositionally biased stretch (basic and acidic residues) spans 236–252; it reads TVRESVMEESPSKDPGD. Low complexity predominate over residues 260 to 301; the sequence is STSTLTSQTTTSSSATAEPSAKAAESQAGSAGSSGSCSNPAA. The segment covering 313 to 322 has biased composition (polar residues); sequence WARSMSTNKT. The calmodulin-binding stretch occupies residues 364–387; sequence EKPKFRSVAHAIRAGIFVDRMYRR. The PDEase domain occupies 392 to 786; it reads ALTAFPPDVV…RIWKEQAVKD (395 aa). Residue His-469 is the Proton donor of the active site. Residues His-473, His-509, Asp-510, and Asp-617 each contribute to the Zn(2+) site. Asp-510 contacts Mg(2+). Disordered regions lie at residues 720-744 and 797-834; these read IVIP…AKTT and EEAA…GAAA. Residues 732–741 are compositionally biased toward basic and acidic residues; the sequence is DKPRDHRTEA. Low complexity predominate over residues 823-834; sequence EPAAEPADGAAA.

Belongs to the cyclic nucleotide phosphodiesterase family. PDE1 subfamily. Requires Zn(2+) as cofactor. It depends on Mg(2+) as a cofactor. Expressed in the head (at protein level). Expressed in Malpighian tubules. Expressed in neurons in the brain and ventral ganglia with male flies having higher levels of expression in the abdominal ganglia compared to female flies.

The catalysed reaction is a nucleoside 3',5'-cyclic phosphate + H2O = a nucleoside 5'-phosphate + H(+). It catalyses the reaction 3',5'-cyclic GMP + H2O = GMP + H(+). It carries out the reaction 3',5'-cyclic AMP + H2O = AMP + H(+). Type I PDE are activated by the binding of calmodulin in the presence of Ca(2+). Inhibited by zaprinast and sildenafil. Its function is as follows. Cyclic nucleotide phosphodiesterase with a dual specificity for the second messengers cAMP and cGMP, which are key regulators of many important physiological processes. Required for male fertility and male mating behavior. In Drosophila melanogaster (Fruit fly), this protein is Dual specificity calcium/calmodulin-dependent 3',5'-cyclic nucleotide phosphodiesterase 1.